Consider the following 406-residue polypeptide: Tryptophan 2,3-dioxygenase (406 aa).

Phosphoserine is present on serine 19. Substrate-binding positions include 72–76 (FIITH) and arginine 144. Histidine 328 lines the heme pocket. Threonine 342 is a binding site for substrate.

It belongs to the tryptophan 2,3-dioxygenase family. Homotetramer. Dimer of dimers. Heme serves as cofactor.

The enzyme catalyses L-tryptophan + O2 = N-formyl-L-kynurenine. It functions in the pathway amino-acid degradation; L-tryptophan degradation via kynurenine pathway; L-kynurenine from L-tryptophan: step 1/2. In terms of biological role, heme-dependent dioxygenase that catalyzes the oxidative cleavage of the L-tryptophan (L-Trp) pyrrole ring and converts L-tryptophan to N-formyl-L-kynurenine. Catalyzes the oxidative cleavage of the indole moiety. This Mus musculus (Mouse) protein is Tryptophan 2,3-dioxygenase.